The following is a 1241-amino-acid chain: eIF-2-alpha kinase GCN2 (1241 aa).

Residues 1–15 (MGRSSSKKKKKRGGS) show a composition bias toward basic residues. Residues 1 to 33 (MGRSSSKKKKKRGGSGRRGQLKDHGSNADEDNE) are disordered. The RWD domain occupies 37–148 (EEITALSAIF…EAAQEFLSEI (112 aa)). The segment at 253–321 (PIAKLNTVQE…SLGSWSSDSL (69 aa)) is disordered. 2 stretches are compositionally biased toward low complexity: residues 267-276 (DTSISSFDSS) and 307-321 (NSES…SDSL). In terms of domain architecture, Protein kinase spans 425-731 (FEELKPLGQG…ATELLKHAFP (307 aa)). Residues 431–439 (LGQGGFGHV) and Lys454 each bind ATP. Residue Asp586 is the Proton acceptor of the active site. The histidyl-tRNA synthetase-like stretch occupies residues 819 to 1219 (IPMRLLSDCP…ELKKEKVVGR (401 aa)).

It belongs to the protein kinase superfamily. Ser/Thr protein kinase family. GCN2 subfamily. In terms of assembly, homodimer; homodimerization is important for kinase activation by uncharged tRNAs. As to expression, expressed in roots, leaves, stems, buds, flowers, siliques and seedlings.

The protein resides in the cytoplasm. The catalysed reaction is L-seryl-[protein] + ATP = O-phospho-L-seryl-[protein] + ADP + H(+). The enzyme catalyses L-threonyl-[protein] + ATP = O-phospho-L-threonyl-[protein] + ADP + H(+). With respect to regulation, the kinase activity is stimulated upon binding to uncharged tRNAs. Its function is as follows. Metabolic-stress sensing protein kinase that phosphorylates the alpha subunit of eukaryotic translation initiation factor 2 eIF-2-alpha in response to low amino acid availability. Plays a role as an activator of the general amino acid control pathway required for adapatation to amino acid starvation. Converts phosphorylated eIF-2-alpha either to a competitive inhibitor of translation initiation, leading to a global protein synthesis repression, and thus to a reduced overall utilization of amino acids, or to a translational initiation activation of specific mRNAs, and hence allowing reprogramming of amino acid biosynthetic gene expression to alleviate nutrient depletion. Binds uncharged tRNAs. This chain is eIF-2-alpha kinase GCN2, found in Arabidopsis thaliana (Mouse-ear cress).